We begin with the raw amino-acid sequence, 426 residues long: Formate-dependent phosphoribosylglycinamide formyltransferase (426 aa).

N(1)-(5-phospho-beta-D-ribosyl)glycinamide-binding positions include 26-27 (EL) and Glu-86. Residues Arg-118, Lys-158, 197-200 (EEFI), and Glu-205 contribute to the ATP site. One can recognise an ATP-grasp domain in the interval 123 to 324 (EAIASTGART…EFALHAKAVL (202 aa)). 2 residues coordinate Mg(2+): Glu-279 and Glu-293. Residues Asp-300, Lys-374, and 381-382 (RR) contribute to the N(1)-(5-phospho-beta-D-ribosyl)glycinamide site.

Belongs to the PurK/PurT family. As to quaternary structure, homodimer.

The enzyme catalyses N(1)-(5-phospho-beta-D-ribosyl)glycinamide + formate + ATP = N(2)-formyl-N(1)-(5-phospho-beta-D-ribosyl)glycinamide + ADP + phosphate + H(+). Its pathway is purine metabolism; IMP biosynthesis via de novo pathway; N(2)-formyl-N(1)-(5-phospho-D-ribosyl)glycinamide from N(1)-(5-phospho-D-ribosyl)glycinamide (formate route): step 1/1. In terms of biological role, involved in the de novo purine biosynthesis. Catalyzes the transfer of formate to 5-phospho-ribosyl-glycinamide (GAR), producing 5-phospho-ribosyl-N-formylglycinamide (FGAR). Formate is provided by PurU via hydrolysis of 10-formyl-tetrahydrofolate. The chain is Formate-dependent phosphoribosylglycinamide formyltransferase from Methanocella arvoryzae (strain DSM 22066 / NBRC 105507 / MRE50).